A 644-amino-acid polypeptide reads, in one-letter code: 1-deoxy-D-xylulose-5-phosphate synthase (644 aa).

Thiamine diphosphate contacts are provided by residues His-78 and Gly-120–Ala-122. Asp-149 contacts Mg(2+). Thiamine diphosphate contacts are provided by residues Ala-150 to Ala-151, Asn-178, and Glu-373. Asn-178 serves as a coordination point for Mg(2+).

Belongs to the transketolase family. DXPS subfamily. Homodimer. Mg(2+) serves as cofactor. Thiamine diphosphate is required as a cofactor.

It carries out the reaction D-glyceraldehyde 3-phosphate + pyruvate + H(+) = 1-deoxy-D-xylulose 5-phosphate + CO2. The protein operates within metabolic intermediate biosynthesis; 1-deoxy-D-xylulose 5-phosphate biosynthesis; 1-deoxy-D-xylulose 5-phosphate from D-glyceraldehyde 3-phosphate and pyruvate: step 1/1. Functionally, catalyzes the acyloin condensation reaction between C atoms 2 and 3 of pyruvate and glyceraldehyde 3-phosphate to yield 1-deoxy-D-xylulose-5-phosphate (DXP). This Chlamydia caviae (strain ATCC VR-813 / DSM 19441 / 03DC25 / GPIC) (Chlamydophila caviae) protein is 1-deoxy-D-xylulose-5-phosphate synthase.